Consider the following 253-residue polypeptide: Ubiquinone biosynthesis O-methyltransferase (253 aa).

S-adenosyl-L-methionine is bound by residues R47, G78, D99, and M141.

Belongs to the methyltransferase superfamily. UbiG/COQ3 family.

It carries out the reaction a 3-demethylubiquinol + S-adenosyl-L-methionine = a ubiquinol + S-adenosyl-L-homocysteine + H(+). The enzyme catalyses a 3-(all-trans-polyprenyl)benzene-1,2-diol + S-adenosyl-L-methionine = a 2-methoxy-6-(all-trans-polyprenyl)phenol + S-adenosyl-L-homocysteine + H(+). The protein operates within cofactor biosynthesis; ubiquinone biosynthesis. O-methyltransferase that catalyzes the 2 O-methylation steps in the ubiquinone biosynthetic pathway. In Rhodopseudomonas palustris (strain HaA2), this protein is Ubiquinone biosynthesis O-methyltransferase.